An 82-amino-acid chain; its full sequence is Small ribosomal subunit protein bS16 (82 aa).

The protein belongs to the bacterial ribosomal protein bS16 family.

The sequence is that of Small ribosomal subunit protein bS16 from Dehalococcoides mccartyi (strain ATCC BAA-2100 / JCM 16839 / KCTC 5957 / BAV1).